The primary structure comprises 813 residues: Leucine--tRNA ligase (813 aa).

The short motif at 41 to 51 is the 'HIGH' region element; sequence PYPSGTLHMGH. The short motif at 575 to 579 is the 'KMSKS' region element; the sequence is KMSKS. Position 578 (Lys578) interacts with ATP.

It belongs to the class-I aminoacyl-tRNA synthetase family.

The protein resides in the cytoplasm. The enzyme catalyses tRNA(Leu) + L-leucine + ATP = L-leucyl-tRNA(Leu) + AMP + diphosphate. This is Leucine--tRNA ligase from Francisella tularensis subsp. tularensis (strain FSC 198).